The sequence spans 92 residues: Muscle LIM protein 1 (92 aa).

One can recognise an LIM zinc-binding domain in the interval 11–62; it reads CPACGKSVYAAEERVAGGYKFHKTCFKCSMCNKALDSTNCTEHEKELFCKNC. Residues 65–70 carry the Nuclear localization signal motif; that stretch reads RKYGPK.

As to expression, in the embryo, expression is restricted to the somatic, visceral, and pharyngeal muscles. Within the somatic musculature, MLP60 is distributed throughout the muscle fibers. There is no expression in cardiac mesoderm or in fat body.

The protein resides in the cytoplasm. The protein localises to the nucleus. In terms of biological role, positive regulator of myogenesis. The sequence is that of Muscle LIM protein 1 (Mlp60A) from Drosophila melanogaster (Fruit fly).